Consider the following 300-residue polypeptide: Type II restriction enzyme HindIII (300 aa).

The catalysed reaction is Endonucleolytic cleavage of DNA to give specific double-stranded fragments with terminal 5'-phosphates.. Its function is as follows. A P subtype restriction enzyme that recognizes the double-stranded sequence 5'-AAGCTT-3' and cleaves after A-1. This Haemophilus influenzae (strain ATCC 51907 / DSM 11121 / KW20 / Rd) protein is Type II restriction enzyme HindIII.